Reading from the N-terminus, the 506-residue chain is Squalene monooxygenase 1,1 (506 aa).

2 consecutive transmembrane segments (helical) span residues 3–23 (LAFP…WTVF) and 47–67 (DADV…YALA). Residues 57-58 (VG), 77-78 (ER), R85, F90, R157, V173, D336, and M349 each bind FAD. Residues 447–467 (LIFHLCGITLSSIGQLLSPFP) traverse the membrane as a helical segment.

It belongs to the squalene monooxygenase family. Requires FAD as cofactor.

Its subcellular location is the membrane. The catalysed reaction is squalene + reduced [NADPH--hemoprotein reductase] + O2 = (S)-2,3-epoxysqualene + oxidized [NADPH--hemoprotein reductase] + H2O + H(+). It participates in terpene metabolism; lanosterol biosynthesis; lanosterol from farnesyl diphosphate: step 2/3. Functionally, catalyzes the stereospecific oxidation of squalene to (S)-2,3-epoxysqualene, and is considered to be a rate-limiting enzyme in steroid biosynthesis. This Brassica napus (Rape) protein is Squalene monooxygenase 1,1 (SQP1,1).